The sequence spans 184 residues: MILMHDITRDGNPVLRQVAKPLTFPLADEYKELADEMMQYLINSQDPKIAEKHQLRAGVGLAAPQVGKSIQMAALLVPNDKGEIIFKEVFVNPKIISESVRKACLAEGEGCLSVDKDIEGYVPRPDKLKIHYYTVDGEEKTIRLKDYPAIVASHEIDHLNGHLFYDRINKQNPFDLAEDTIVIS.

Residues C111 and H154 each coordinate Fe cation. Residue E155 is part of the active site. H158 serves as a coordination point for Fe cation.

It belongs to the polypeptide deformylase family. Fe(2+) is required as a cofactor.

The enzyme catalyses N-terminal N-formyl-L-methionyl-[peptide] + H2O = N-terminal L-methionyl-[peptide] + formate. In terms of biological role, removes the formyl group from the N-terminal Met of newly synthesized proteins. Requires at least a dipeptide for an efficient rate of reaction. N-terminal L-methionine is a prerequisite for activity but the enzyme has broad specificity at other positions. The sequence is that of Peptide deformylase from Lactobacillus gasseri (strain ATCC 33323 / DSM 20243 / BCRC 14619 / CIP 102991 / JCM 1131 / KCTC 3163 / NCIMB 11718 / NCTC 13722 / AM63).